The following is a 120-amino-acid chain: Large ribosomal subunit protein uL22 (120 aa).

Belongs to the universal ribosomal protein uL22 family. Part of the 50S ribosomal subunit.

Its function is as follows. This protein binds specifically to 23S rRNA; its binding is stimulated by other ribosomal proteins, e.g. L4, L17, and L20. It is important during the early stages of 50S assembly. It makes multiple contacts with different domains of the 23S rRNA in the assembled 50S subunit and ribosome. Functionally, the globular domain of the protein is located near the polypeptide exit tunnel on the outside of the subunit, while an extended beta-hairpin is found that lines the wall of the exit tunnel in the center of the 70S ribosome. The polypeptide is Large ribosomal subunit protein uL22 (Oenococcus oeni (strain ATCC BAA-331 / PSU-1)).